The sequence spans 256 residues: Protein TV0584 (256 aa).

It belongs to the CinA family.

The chain is Protein TV0584 from Thermoplasma volcanium (strain ATCC 51530 / DSM 4299 / JCM 9571 / NBRC 15438 / GSS1).